The following is a 325-amino-acid chain: Ribose-phosphate pyrophosphokinase 2 (325 aa).

96 to 101 contributes to the ATP binding site; it reads RQDKKD. The Mg(2+) site is built by Asp135, His137, Asp146, and Asp150. His137 lines the ATP pocket. The segment at 219–234 is binding of phosphoribosylpyrophosphate; that stretch reads KDRVAILVDDMADTCG.

This sequence belongs to the ribose-phosphate pyrophosphokinase family. As to quaternary structure, homodimer. The active form is probably a hexamer composed of 3 homodimers. Mg(2+) is required as a cofactor.

The enzyme catalyses D-ribose 5-phosphate + ATP = 5-phospho-alpha-D-ribose 1-diphosphate + AMP + H(+). It participates in metabolic intermediate biosynthesis; 5-phospho-alpha-D-ribose 1-diphosphate biosynthesis; 5-phospho-alpha-D-ribose 1-diphosphate from D-ribose 5-phosphate (route I): step 1/1. Activated by magnesium and inorganic phosphate. Competitively or non-competitively inhibited by ADP, 2,3-bisphosphoglyceride or GDP. Functionally, catalyzes the synthesis of phosphoribosylpyrophosphate (PRPP) that is essential for nucleotide synthesis. This chain is Ribose-phosphate pyrophosphokinase 2 (PRPS2), found in Gallus gallus (Chicken).